The sequence spans 466 residues: Ribosome biogenesis protein YTM1 (466 aa).

Residues Ile-8–Arg-95 form a ubiquitin-like (UBL) domain region. The segment at Ser-105 to Lys-466 is sufficient for interaction with ERB1 and association with 66S pre-ribosomes. WD repeat units follow at residues Pro-120–Tyr-159, Gly-161–Asp-199, Gly-214–Ile-253, Gly-291–Thr-331, Thr-333–Glu-372, Gly-381–Thr-421, and Lys-431–Lys-466.

The protein belongs to the WD repeat WDR12/YTM1 family. As to quaternary structure, component of the NOP7 complex, composed of ERB1, NOP7 and YTM1. The complex is held together by ERB1, which interacts with NOP7 via its N-terminal domain and with YTM1 via a high-affinity interaction between the seven-bladed beta-propeller domains of the 2 proteins. The NOP7 complex associates with the 66S pre-ribosome. Interacts (via UBL domain) with MDN1 (via VWFA/MIDAS domain).

The protein resides in the nucleus. It is found in the nucleolus. It localises to the nucleoplasm. Component of the NOP7 complex, which is required for maturation of the 25S and 5.8S ribosomal RNAs and formation of the 60S ribosome. The protein is Ribosome biogenesis protein YTM1 of Debaryomyces hansenii (strain ATCC 36239 / CBS 767 / BCRC 21394 / JCM 1990 / NBRC 0083 / IGC 2968) (Yeast).